A 348-amino-acid polypeptide reads, in one-letter code: NADH-quinone oxidoreductase subunit H (348 aa).

Helical transmembrane passes span 10–30 (LPLF…LVLI), 82–102 (GVFL…WAVV), 115–135 (VGLL…IMGG), 161–181 (IGFV…TTIV), 199–219 (LLDW…ISAL), 251–271 (LFFL…TILF), 287–307 (VPGV…FAMV), and 322–342 (LGWK…AAIL).

Belongs to the complex I subunit 1 family. NDH-1 is composed of 14 different subunits. Subunits NuoA, H, J, K, L, M, N constitute the membrane sector of the complex.

The protein localises to the cell inner membrane. It catalyses the reaction a quinone + NADH + 5 H(+)(in) = a quinol + NAD(+) + 4 H(+)(out). In terms of biological role, NDH-1 shuttles electrons from NADH, via FMN and iron-sulfur (Fe-S) centers, to quinones in the respiratory chain. The immediate electron acceptor for the enzyme in this species is believed to be ubiquinone. Couples the redox reaction to proton translocation (for every two electrons transferred, four hydrogen ions are translocated across the cytoplasmic membrane), and thus conserves the redox energy in a proton gradient. This subunit may bind ubiquinone. In Bartonella bacilliformis (strain ATCC 35685 / KC583 / Herrer 020/F12,63), this protein is NADH-quinone oxidoreductase subunit H.